The primary structure comprises 305 residues: Glycine--tRNA ligase alpha subunit (305 aa).

It belongs to the class-II aminoacyl-tRNA synthetase family. In terms of assembly, tetramer of two alpha and two beta subunits.

The protein localises to the cytoplasm. The enzyme catalyses tRNA(Gly) + glycine + ATP = glycyl-tRNA(Gly) + AMP + diphosphate. This Streptococcus pyogenes serotype M12 (strain MGAS2096) protein is Glycine--tRNA ligase alpha subunit.